The chain runs to 292 residues: ATP synthase gamma chain (292 aa).

Belongs to the ATPase gamma chain family. As to quaternary structure, F-type ATPases have 2 components, CF(1) - the catalytic core - and CF(0) - the membrane proton channel. CF(1) has five subunits: alpha(3), beta(3), gamma(1), delta(1), epsilon(1). CF(0) has three main subunits: a, b and c.

It localises to the cell inner membrane. Its function is as follows. Produces ATP from ADP in the presence of a proton gradient across the membrane. The gamma chain is believed to be important in regulating ATPase activity and the flow of protons through the CF(0) complex. The polypeptide is ATP synthase gamma chain (Nitrobacter hamburgensis (strain DSM 10229 / NCIMB 13809 / X14)).